The chain runs to 195 residues: Thioredoxin reductase-like selenoprotein T (195 aa).

The N-terminal stretch at 1 to 19 (MRLLLLLLVAASAVVRSEA) is a signal peptide. Residues 46–49 (CVSU) constitute a cross-link (cysteinyl-selenocysteine (Cys-Sec)). Residue Sec49 is a non-standard amino acid, selenocysteine. The chain crosses the membrane as a helical span at residues 85 to 103 (IASFLSVFKLVLIGLIIVG).

It belongs to the SelWTH family. Selenoprotein T subfamily. In terms of processing, may contain a selenide-sulfide bond between Cys-46 and Sec-49. This bond is speculated to serve as redox-active pair. As to expression, ubiquitous. Highly expressed in the endocrine pancreas. Expressed at low levels in the adult brain.

The protein localises to the endoplasmic reticulum membrane. It carries out the reaction [thioredoxin]-dithiol + NADP(+) = [thioredoxin]-disulfide + NADPH + H(+). Functionally, selenoprotein with thioredoxin reductase-like oxidoreductase activity. Protects dopaminergic neurons against oxidative stress and cell death. Involved in ADCYAP1/PACAP-induced calcium mobilization and neuroendocrine secretion. Plays a role in fibroblast anchorage and redox regulation. In gastric smooth muscle, modulates the contraction processes through the regulation of calcium release and MYLK activation. In pancreatic islets, involved in the control of glucose homeostasis, contributes to prolonged ADCYAP1/PACAP-induced insulin secretion. The sequence is that of Thioredoxin reductase-like selenoprotein T from Mus musculus (Mouse).